We begin with the raw amino-acid sequence, 29 residues long: Cytochrome b6-f complex subunit 8 (29 aa).

The chain crosses the membrane as a helical span at residues I3–V23.

This sequence belongs to the PetN family. In terms of assembly, the 4 large subunits of the cytochrome b6-f complex are cytochrome b6, subunit IV (17 kDa polypeptide, PetD), cytochrome f and the Rieske protein, while the 4 small subunits are PetG, PetL, PetM and PetN. The complex functions as a dimer.

The protein localises to the cellular thylakoid membrane. Its function is as follows. Component of the cytochrome b6-f complex, which mediates electron transfer between photosystem II (PSII) and photosystem I (PSI), cyclic electron flow around PSI, and state transitions. The protein is Cytochrome b6-f complex subunit 8 of Mastigocladus laminosus (Fischerella sp.).